The sequence spans 75 residues: DNA-directed RNA polymerase subunit omega (75 aa).

Belongs to the RNA polymerase subunit omega family. In cyanobacteria the RNAP catalytic core is composed of 2 alpha, 1 beta, 1 beta', 1 gamma and 1 omega subunit. When a sigma factor is associated with the core the holoenzyme is formed, which can initiate transcription.

It catalyses the reaction RNA(n) + a ribonucleoside 5'-triphosphate = RNA(n+1) + diphosphate. Promotes RNA polymerase assembly. Latches the N- and C-terminal regions of the beta' subunit thereby facilitating its interaction with the beta and alpha subunits. The protein is DNA-directed RNA polymerase subunit omega of Synechococcus sp. (strain CC9605).